The following is a 526-amino-acid chain: Acid-sensing ion channel 1 (526 aa).

The Cytoplasmic segment spans residues 1–49; that stretch reads MELKTEEEEVGGVQPVSIQAFASSSTLHGLAHIFSYERLSLKRALWALC. The helical transmembrane segment at 50–66 threads the bilayer; that stretch reads FLGSLAVLLCVCTERVQ. Topologically, residues 67 to 425 are extracellular; that stretch reads YYFCYHHVTK…ETIEQKKAYE (359 aa). 7 disulfides stabilise this stretch: Cys93/Cys194, Cys172/Cys179, Cys290/Cys365, Cys308/Cys361, Cys312/Cys359, Cys321/Cys343, and Cys323/Cys335. N-linked (GlcNAc...) asparagine glycans are attached at residues Asn366 and Asn393. Residues 426-456 form a discontinuously helical membrane-spanning segment; the sequence is IAGLLGDIGGQMGLFIGASILTVLELFDYAY. The GAS motif; ion selectivity filter motif lies at 442–444; the sequence is GAS. Topologically, residues 457–526 are cytoplasmic; sequence EVIKHRLCRR…ARGTFEDFTC (70 aa). A phosphoserine mark is found at Ser477 and Ser497.

Belongs to the amiloride-sensitive sodium channel (TC 1.A.6) family. ASIC1 subfamily. In terms of assembly, homotrimer. Heterotrimer; with other ASIC proteins producing channel with different properties. Interacts with PICK1; regulates ASIC1 clustering in membranes. Interacts with STOM; alters heterotrimeric ASIC channels activity. Post-translationally, pH-gating could be regulated by serine proteases. In terms of processing, phosphorylation by PKA regulates interaction with PICK1 and subcellular localization. Phosphorylation by PKC may regulate the channel. In terms of tissue distribution, expressed in dorsal root ganglia and sciatic nerve (at protein level). Widely distributed throughout the brain. Expressed in olfactory bulb, neo and allocortical regions, dentate granule cells, pyramidal cells of CA1-CA3 subfields of the hippocampal formation, habenula, basolateral amygdaloid nuclei, and in the Purkinje and granule cells of the cerebellum. Diffusely detected over most other regions of the basal ganglia, including thalamic nuclei, substantia nigra, striatum and globus pallidus, hypothalamus, midbrain, pons, medulla and choroid plexus. Expressed only in dorsal root ganglion (DRG). As to expression, expressed exclusively in trigeminal ganglion and dorsal root ganglion.

It localises to the cell membrane. Its subcellular location is the postsynaptic cell membrane. The protein resides in the cell projection. The protein localises to the dendrite. It carries out the reaction Na(+)(in) = Na(+)(out). The enzyme catalyses Li(+)(in) = Li(+)(out). It catalyses the reaction K(+)(in) = K(+)(out). The catalysed reaction is Ca(2+)(in) = Ca(2+)(out). It carries out the reaction H(+)(in) = H(+)(out). Its activity is regulated as follows. Inhibited by the diuretic drug amiloride. External calcium is required to potentiate proton activation of ASIC1 at physiological concentrations, but at higher, non-physiological concentrations, it inhibits activation. Also potentiated by other multivalent cations like Mg(2+), Ba(2+). Activated by FMRFamide-related neuropeptides. Inhibited by anti-inflammatory drugs like salicylic acid. The spider venom psalmotoxin-1 specifically inhibits the ASIC1 homotrimer. The snake venom mambalgin-1, mambalgin-2 and mambalgin-3 inhibit the homotrimer of Asic1a (ASIC1 isoform 1). The snake venom mambalgin-1 and mambalgin-2 inhibit heterotrimers of Asic1a-Asic1b (ASIC1 isoform 1-ASIC1 isoform 3). Heterotrimer of Asic1a-Asic2a is inhibited by the snake venom mambalgin-1, mambalgin-2 and mambalgin-3. Heterotrimer of Asic1a-Asic2b is inhibited by the snake venom mambalgin-1 and mambalgin-2. The spider venom Pi-theraphotoxin-Hm3a inhibits the homotrimer of Asic1a (ASIC1 isoform 1). The spider venom Pi-theraphotoxin-Hm3a inhibits heterotrimers of Asic1a-Asic1b (ASIC1 isoform 1-ASIC1 isoform 3). The spider venom Pi-hexatoxin-Hi1a inhibits the ASIC1 homotrimer. Not inhibited by extracellular calcium. Functionally, forms voltage-independent, pH-gated trimeric sodium channels that act as postsynaptic excitatory receptors in the nervous system, playing a crucial role in regulating synaptic plasticity, learning, and memory. Upon extracellular pH drop this channel elicits transient, fast activating, and completely desensitizing inward currents. Displays high selectivity for sodium ions but can also permit the permeation of other cations. Regulates more or less directly intracellular calcium concentration and CaMKII phosphorylation, and thereby the density of dendritic spines. Modulates neuronal activity in the circuits underlying innate fear. Permeable to other cations including calcium, lithium and potassium. Its function is as follows. pH activation and steady-state inactivation are shifted to more acidic values. Forms channels that are not permeable to calcium as it discrimates stronger between monovalent cations. In terms of biological role, has no pH-gated sodium channel activity per se but can associate with other ASICs and regulate their pH-sensitivity. The polypeptide is Acid-sensing ion channel 1 (Rattus norvegicus (Rat)).